The chain runs to 72 residues: Prokaryotic ubiquitin-like protein Pup (72 aa).

The span at 1-10 (MATKDTGGGQ) shows a compositional bias: gly residues. The disordered stretch occupies residues 1–45 (MATKDTGGGQQKATRSTEEVEEQAQDAQASEDLKERQEKLSDDVD). The stretch at 10-60 (QQKATRSTEEVEEQAQDAQASEDLKERQEKLSDDVDSVLDEIDDVLEENAE) forms a coiled coil. The segment at 28–66 (QASEDLKERQEKLSDDVDSVLDEIDDVLEENAEDFVRSF) is ARC ATPase binding. Basic and acidic residues predominate over residues 31–42 (EDLKERQEKLSD). An Isoglutamyl lysine isopeptide (Glu-Lys) (interchain with K-? in acceptor proteins) cross-link involves residue glutamate 72.

It belongs to the prokaryotic ubiquitin-like protein family. As to quaternary structure, strongly interacts with the proteasome-associated ATPase ARC through a hydrophobic interface; the interacting region of Pup lies in its C-terminal half. There is one Pup binding site per ARC hexamer ring.

The protein operates within protein degradation; proteasomal Pup-dependent pathway. Its function is as follows. Protein modifier that is covalently attached to lysine residues of substrate proteins, thereby targeting them for proteasomal degradation. The tagging system is termed pupylation. This is Prokaryotic ubiquitin-like protein Pup from Streptomyces coelicolor (strain ATCC BAA-471 / A3(2) / M145).